Reading from the N-terminus, the 294-residue chain is Protease HtpX (294 aa).

2 helical membrane passes run 4–24 (ILLF…ILFI) and 33–53 (FGLI…SLLL). Zn(2+) is bound at residue His139. Glu140 is a catalytic residue. Residue His143 coordinates Zn(2+). Helical transmembrane passes span 147–167 (GDMI…IFLS) and 197–217 (FFIS…ITFW). Glu223 contacts Zn(2+).

This sequence belongs to the peptidase M48B family. Zn(2+) serves as cofactor.

It localises to the cell membrane. The polypeptide is Protease HtpX (Wigglesworthia glossinidia brevipalpis).